The primary structure comprises 83 residues: Large ribosomal subunit protein eL31 (83 aa).

The protein belongs to the eukaryotic ribosomal protein eL31 family.

The protein is Large ribosomal subunit protein eL31 of Methanococcus vannielii (strain ATCC 35089 / DSM 1224 / JCM 13029 / OCM 148 / SB).